Consider the following 730-residue polypeptide: Probable palmitoyltransferase AKR2 (730 aa).

ANK repeat units follow at residues 32–62 (FVVE…DINK), 66–95 (DELP…NVNQ), 100–129 (ERAT…NPTL), 133–166 (QGLN…NVDI), 172–201 (NNRT…TVAL), and 205–234 (RGFN…NFYE). Helical transmembrane passes span 283-303 (LMIF…SLIL), 309-328 (IALS…KFVL), 344-364 (TPFF…IWVK), and 376-396 (AKDA…LKLV). One can recognise a DHHC domain in the interval 429 to 479 (NFCVETLERKPLRSKYSLFSGALVARFNHYCPWVYNDIGLKNHKLFMFFAF). Cys-459 acts as the S-palmitoyl cysteine intermediate in catalysis. 2 helical membrane-spanning segments follow: residues 473–493 (LFMF…WLCL) and 530–550 (TFFL…MLIV).

The protein belongs to the DHHC palmitoyltransferase family. AKR/ZDHHC17 subfamily.

Its subcellular location is the membrane. It catalyses the reaction L-cysteinyl-[protein] + hexadecanoyl-CoA = S-hexadecanoyl-L-cysteinyl-[protein] + CoA. The polypeptide is Probable palmitoyltransferase AKR2 (AKR2) (Saccharomyces uvarum (strain ATCC 76518 / CBS 7001 / CLIB 283 / NBRC 10550 / MCYC 623 / NCYC 2669 / NRRL Y-11845) (Yeast)).